The chain runs to 153 residues: Jacalin-related lectin Calsepa (153 aa).

Ala2 is subject to N-acetylalanine. One can recognise a Jacalin-type lectin domain in the interval Asp6 to His152. 3 N-glycan binding regions span residues Gly17–Asn18, Asp95–Asn96, and Gly140–Asp144.

Belongs to the jacalin lectin family. In terms of assembly, homodimer. Not glycosylated. As to expression, rhizome (at protein level). Detected in the cortex and the pith of rhizome. Not detected in vascular tissues, pericycle, endodermis or rhizodermis.

It is found in the cytoplasm. With respect to regulation, hemagglutinating activity is most inhibited by methyl alpha-mannopyranoside. This activity is inhibited to a less extent (about a third of the inhibition of that of methyl alpha-mannopyranoside) by methyl alpha-glucoside, other alpha-glucosides, such as maltose, isomaltose, panose or palatinose, and alpha-glucosides modified at the second position, such as methyl 2-deoxy-alpha-arabinoglucopyranoside or methyl 2-acetamido-2-deoxy alpha-glucopyranoside. Mildly inhibited by free monosaccharides, with glucose presenting at least 20-fold less inhibitory effect on hemagglutinating activity than mannose. Glycoproteins are somewhat inhibitory, the best being asialothyroglobulin and ovomucoid. Not inhibited by isomaltitol, sucrose or trehalose. Mannose-binding lectin. Preferentially binds mannose at concentrations ranging between 5 and 25 mM, but also binds glucose. Has a marked preference for methylated sugar derivatives, such as alpha-MeMan and alpha-MeGlc, at concentration down to 5 mM. Binds to N-glycans, but not to glycolipid-type or other type of glycans. Binds N-linked high-mannose-type glycans. Has a preference for smaller (Man(2)-Man(6)) high-mannose-type glycans to larger (Man(7)-Man(9)) ones. Recognizes both alpha1-6 extended and alpha1-3 extended monoantennary glycans. The addition of alpha1-2Man to the Man-alpha1-3Man-beta branch results in a significant loss of affinity, but beta1-2GlcNAc has some affinity. Has less affinity for biantennary glycans. However, affinity is significant for the biantennary complex-type N-glycans with bisecting GlcNAc. No affinity is observed for tri- and tetra-antennary glycans. Binds bisected glycans of the mouse brain. Selectively binds to bisecting N-glycans which are in back-fold conformation, and does not favor a glycan with an extend conformation. Has hemagglutinating activity against rabbit erythrocytes at 0.3 ug/ml and against trypsin-treated human erythrocytes at 5 ug/ml. Has mitogenic activity in murine cells. The polypeptide is Jacalin-related lectin Calsepa (Calystegia sepium (Hedge bindweed)).